We begin with the raw amino-acid sequence, 243 residues long: Peptidyl-tRNA hydrolase (243 aa).

Residue Y14 participates in tRNA binding. The active-site Proton acceptor is the H19. 3 residues coordinate tRNA: F64, N66, and N112. The segment covering 190 to 205 (KAEEEKPAKEMKDAGK) has biased composition (basic and acidic residues). Residues 190–243 (KAEEEKPAKEMKDAGKKPASQSHIHQARNHNQPKLPATGPMADMLKKMFGKKGD) form a disordered region. A compositionally biased stretch (polar residues) spans 208–221 (ASQSHIHQARNHNQ).

The protein belongs to the PTH family. As to quaternary structure, monomer.

It localises to the cytoplasm. The enzyme catalyses an N-acyl-L-alpha-aminoacyl-tRNA + H2O = an N-acyl-L-amino acid + a tRNA + H(+). In terms of biological role, hydrolyzes ribosome-free peptidyl-tRNAs (with 1 or more amino acids incorporated), which drop off the ribosome during protein synthesis, or as a result of ribosome stalling. Its function is as follows. Catalyzes the release of premature peptidyl moieties from peptidyl-tRNA molecules trapped in stalled 50S ribosomal subunits, and thus maintains levels of free tRNAs and 50S ribosomes. This chain is Peptidyl-tRNA hydrolase, found in Rhizobium johnstonii (strain DSM 114642 / LMG 32736 / 3841) (Rhizobium leguminosarum bv. viciae).